A 227-amino-acid chain; its full sequence is Ion-translocating oxidoreductase complex subunit E (227 aa).

A run of 6 helical transmembrane segments spans residues 18–38 (ALVQ…VTNA), 39–59 (LGLG…VSLV), 69–89 (IPVF…LMNA), 93–113 (GLYL…IIIG), 125–145 (LPAV…LVLL), and 182–202 (HFLL…LIAL).

It belongs to the NqrDE/RnfAE family. In terms of assembly, the complex is composed of six subunits: RnfA, RnfB, RnfC, RnfD, RnfE and RnfG.

It localises to the cell inner membrane. Functionally, part of a membrane-bound complex that couples electron transfer with translocation of ions across the membrane. The sequence is that of Ion-translocating oxidoreductase complex subunit E from Aliivibrio fischeri (strain MJ11) (Vibrio fischeri).